Here is a 76-residue protein sequence, read N- to C-terminus: Acyl carrier protein (76 aa).

Residues 1-76 (MATFDDVKDV…AAVDYIDNNQ (76 aa)) form the Carrier domain. S36 carries the post-translational modification O-(pantetheine 4'-phosphoryl)serine.

It belongs to the acyl carrier protein (ACP) family. Post-translationally, 4'-phosphopantetheine is transferred from CoA to a specific serine of apo-ACP by AcpS. This modification is essential for activity because fatty acids are bound in thioester linkage to the sulfhydryl of the prosthetic group.

It is found in the cytoplasm. The protein operates within lipid metabolism; fatty acid biosynthesis. Its function is as follows. Carrier of the growing fatty acid chain in fatty acid biosynthesis. This Deinococcus radiodurans (strain ATCC 13939 / DSM 20539 / JCM 16871 / CCUG 27074 / LMG 4051 / NBRC 15346 / NCIMB 9279 / VKM B-1422 / R1) protein is Acyl carrier protein.